The primary structure comprises 101 residues: Eukaryotic translation initiation factor 4E-binding protein 3 (101 aa).

The segment at 1 to 28 (MSSSTSCPIPGCRDQLPDGYSTTPGGTL) is disordered. The short motif at 40–46 (YDRKFLL) is the YXXXXLphi motif element. The short motif at 97–101 (FEMDM) is the TOS motif element.

It belongs to the eIF4E-binding protein family. As to quaternary structure, interacts with EIF4E. Interacts with RPA2 (via N-terminus); the interaction enhances EIF4EBP3-mediated inhibition of EIF4E-mediated mRNA nuclear export. In terms of processing, phosphorylated.

It is found in the cytoplasm. The protein resides in the nucleus. Functionally, repressor of translation initiation that regulates EIF4E activity by preventing its assembly into the eIF4F complex: the hypophosphorylated form competes with EIF4G1/EIF4G3 and strongly binds to EIF4E, leading to repression of translation. In contrast, the hyperphosphorylated form dissociates from EIF4E, allowing interaction between EIF4G1/EIF4G3 and EIF4E, leading to initiation of translation. Inhibits EIF4E-mediated mRNA nuclear export. The chain is Eukaryotic translation initiation factor 4E-binding protein 3 (Eif4ebp3) from Mus musculus (Mouse).